Consider the following 267-residue polypeptide: Type III pantothenate kinase (267 aa).

6 to 13 (DSGNSRLK) is a binding site for ATP. Substrate contacts are provided by residues Tyr-96 and 103–106 (GADR). Asp-105 acts as the Proton acceptor in catalysis. Thr-131 is a binding site for ATP. Thr-181 is a substrate binding site.

This sequence belongs to the type III pantothenate kinase family. As to quaternary structure, homodimer. It depends on NH4(+) as a cofactor. The cofactor is K(+).

The protein resides in the cytoplasm. The enzyme catalyses (R)-pantothenate + ATP = (R)-4'-phosphopantothenate + ADP + H(+). The protein operates within cofactor biosynthesis; coenzyme A biosynthesis; CoA from (R)-pantothenate: step 1/5. In terms of biological role, catalyzes the phosphorylation of pantothenate (Pan), the first step in CoA biosynthesis. This is Type III pantothenate kinase from Bordetella bronchiseptica (strain ATCC BAA-588 / NCTC 13252 / RB50) (Alcaligenes bronchisepticus).